Reading from the N-terminus, the 121-residue chain is uncharacterized protein (121 aa).

The HTH gntR-type domain occupies 9-77 (KPIYLQIADQ…RGQGTFIAEK (69 aa)). A DNA-binding region (H-T-H motif) is located at residues 37–56 (VREMAIQTKVNPNTIQRTYS).

This is an uncharacterized protein from Bacillus subtilis (strain 168).